A 517-amino-acid polypeptide reads, in one-letter code: MDFRTACEETKTGICLLQDGNQEPFKVRLHLAKDILMIQEQDVICVSGEPFYSGERTVTIRRQTVGGFGLSIKGGAEHNIPVVVSKISKEQRAELSGLLFIGDAILQINGINVRKCRHEEVVQVLRNAGEEVTLTVSFLKRAPAFLKLPLNEDCACAPSDQSSGTSSPLCDSGLHLNYHPNNTDTLSCSSWPTSPGLRWEKRWCDLRLIPLLHSRFSQYVPGTDLSRQNAFQVIAVDGVCTGIIQCLSAEDCVDWLQAIATNISNLTKHNIKKINRNFPVNQQIVYMGWCEAREQDPLQDRVYSPTFLALRGSCLYKFLAPPVTTWDWTRAEKTFSVYEIMCKILKDSDLLDRRKQCFTVQSESGEDLYFSVELESDLAQWERAFQTATFLEVERIQCKTYACVLESHLMGLTIDFSTGFICFDAATKAVLWRYKFSQLKGSSDDGKSKIKFLFQNPDTKQIEAKELEFSNLFAVLHCIHSFFAAKVACLDPLFLGNQATASTAASSATTSKAKYTT.

A PDZ domain is found at 57-140; the sequence is TVTIRRQTVG…EVTLTVSFLK (84 aa). The region spanning 283–390 is the PH domain; that stretch reads QIVYMGWCEA…WERAFQTATF (108 aa).

This sequence belongs to the syntrophin family. As to quaternary structure, isoform 1, but not isoform 2, interacts with the dystrophin protein DMD and related proteins DTNA and DTNB. Interacts with DGKZ. Brain specific. In CNS, it is expressed in the perikaryon and proximal portion of the neuronal processes. Strong expression in the hippocampus, neuron-rich dendate granule cells, and pyramidal cell layers. Highly expressed in neurons of the cerebral cortex. Also expressed in the cerebellar cortex, deep cerebellar nuclei, thalamus, and basal ganglia. No expression in muscle cells.

Its subcellular location is the cytoplasm. It is found in the cytoskeleton. The protein resides in the nucleus. Adapter protein that binds to and probably organizes the subcellular localization of a variety of proteins. May link various receptors to the actin cytoskeleton and the dystrophin glycoprotein complex. May participate in regulating the subcellular location of diacylglycerol kinase-zeta to ensure that diacylglycerol is rapidly inactivated following receptor activation. The polypeptide is Gamma-1-syntrophin (SNTG1) (Homo sapiens (Human)).